Here is a 242-residue protein sequence, read N- to C-terminus: Large ribosomal subunit protein uL1 (242 aa).

The protein belongs to the universal ribosomal protein uL1 family. As to quaternary structure, part of the 50S ribosomal subunit.

Its function is as follows. Binds directly to 23S rRNA. The L1 stalk is quite mobile in the ribosome, and is involved in E site tRNA release. In terms of biological role, protein L1 is also a translational repressor protein, it controls the translation of the L11 operon by binding to its mRNA. The chain is Large ribosomal subunit protein uL1 from Wigglesworthia glossinidia brevipalpis.